Here is a 410-residue protein sequence, read N- to C-terminus: Kynureninase (410 aa).

Residues Thr-108, Ser-109, 135–138 (FPTD), Thr-176, Asp-205, His-208, and Tyr-230 contribute to the pyridoxal 5'-phosphate site. The residue at position 231 (Lys-231) is an N6-(pyridoxal phosphate)lysine. Positions 260 and 286 each coordinate pyridoxal 5'-phosphate.

It belongs to the kynureninase family. Homodimer. Pyridoxal 5'-phosphate is required as a cofactor.

The enzyme catalyses L-kynurenine + H2O = anthranilate + L-alanine + H(+). It catalyses the reaction 3-hydroxy-L-kynurenine + H2O = 3-hydroxyanthranilate + L-alanine + H(+). It functions in the pathway amino-acid degradation; L-kynurenine degradation; L-alanine and anthranilate from L-kynurenine: step 1/1. Its pathway is cofactor biosynthesis; NAD(+) biosynthesis; quinolinate from L-kynurenine: step 2/3. In terms of biological role, catalyzes the cleavage of L-kynurenine (L-Kyn) and L-3-hydroxykynurenine (L-3OHKyn) into anthranilic acid (AA) and 3-hydroxyanthranilic acid (3-OHAA), respectively. The polypeptide is Kynureninase (Deinococcus radiodurans (strain ATCC 13939 / DSM 20539 / JCM 16871 / CCUG 27074 / LMG 4051 / NBRC 15346 / NCIMB 9279 / VKM B-1422 / R1)).